The chain runs to 508 residues: UDP-N-acetylmuramoyl-L-alanyl-D-glutamate--2,6-diaminopimelate ligase (508 aa).

Residue Ser-33 participates in UDP-N-acetyl-alpha-D-muramoyl-L-alanyl-D-glutamate binding. Residue 121–127 (GTNGKST) participates in ATP binding. Residues Asn-162, 163 to 164 (TT), Ser-190, Gln-196, and Arg-198 contribute to the UDP-N-acetyl-alpha-D-muramoyl-L-alanyl-D-glutamate site. N6-carboxylysine is present on Lys-230. Meso-2,6-diaminopimelate-binding positions include Arg-399, 423-426 (DNPR), Gly-474, and Glu-478. The Meso-diaminopimelate recognition motif motif lies at 423 to 426 (DNPR).

This sequence belongs to the MurCDEF family. MurE subfamily. The cofactor is Mg(2+). In terms of processing, carboxylation is probably crucial for Mg(2+) binding and, consequently, for the gamma-phosphate positioning of ATP.

The protein localises to the cytoplasm. It carries out the reaction UDP-N-acetyl-alpha-D-muramoyl-L-alanyl-D-glutamate + meso-2,6-diaminopimelate + ATP = UDP-N-acetyl-alpha-D-muramoyl-L-alanyl-gamma-D-glutamyl-meso-2,6-diaminopimelate + ADP + phosphate + H(+). Its pathway is cell wall biogenesis; peptidoglycan biosynthesis. Its function is as follows. Catalyzes the addition of meso-diaminopimelic acid to the nucleotide precursor UDP-N-acetylmuramoyl-L-alanyl-D-glutamate (UMAG) in the biosynthesis of bacterial cell-wall peptidoglycan. The chain is UDP-N-acetylmuramoyl-L-alanyl-D-glutamate--2,6-diaminopimelate ligase from Buchnera aphidicola subsp. Baizongia pistaciae (strain Bp).